Reading from the N-terminus, the 72-residue chain is Beta-defensin 104A (72 aa).

The first 22 residues, 1–22 (MRRLVLLLAISLLLYQDLPVRS), serve as a signal peptide directing secretion. Intrachain disulfides connect cysteine 30–cysteine 57, cysteine 37–cysteine 51, and cysteine 41–cysteine 58.

This sequence belongs to the beta-defensin family.

It localises to the secreted. Has antimicrobial activity. The sequence is that of Beta-defensin 104A (DEFB104A) from Pongo pygmaeus (Bornean orangutan).